A 453-amino-acid chain; its full sequence is Ribulose bisphosphate carboxylase large chain (453 aa).

Positions 1-2 (MS) are excised as a propeptide. P3 carries the post-translational modification N-acetylproline. At K14 the chain carries N6,N6,N6-trimethyllysine. N123 and T173 together coordinate substrate. The Proton acceptor role is filled by K175. K177 provides a ligand contact to substrate. Mg(2+) contacts are provided by K201, D203, and E204. K201 carries the post-translational modification N6-carboxylysine. Catalysis depends on H294, which acts as the Proton acceptor. R295, H327, and S379 together coordinate substrate.

The protein belongs to the RuBisCO large chain family. Type I subfamily. As to quaternary structure, heterohexadecamer of 8 large chains and 8 small chains; disulfide-linked. The disulfide link is formed within the large subunit homodimers. Requires Mg(2+) as cofactor. In terms of processing, the disulfide bond which can form in the large chain dimeric partners within the hexadecamer appears to be associated with oxidative stress and protein turnover.

The protein resides in the plastid. It is found in the chloroplast. It catalyses the reaction 2 (2R)-3-phosphoglycerate + 2 H(+) = D-ribulose 1,5-bisphosphate + CO2 + H2O. The enzyme catalyses D-ribulose 1,5-bisphosphate + O2 = 2-phosphoglycolate + (2R)-3-phosphoglycerate + 2 H(+). RuBisCO catalyzes two reactions: the carboxylation of D-ribulose 1,5-bisphosphate, the primary event in carbon dioxide fixation, as well as the oxidative fragmentation of the pentose substrate in the photorespiration process. Both reactions occur simultaneously and in competition at the same active site. The polypeptide is Ribulose bisphosphate carboxylase large chain (Hydnophytum formicarum (Ant plant)).